Consider the following 350-residue polypeptide: GTPase Obg (350 aa).

One can recognise an Obg domain in the interval 1–159 (MKLVDEAEIE…RTLKLELKLL (159 aa)). The tract at residues 126 to 147 (GNMHFKSSTNRSPRQALPGEPG) is disordered. Residues 160–337 (ADVGLLGFPN…IMSRIMAFFD (178 aa)) form the OBG-type G domain. GTP is bound by residues 166-173 (GFPNAGKS), 191-195 (FTTLY), 213-216 (DIPG), 287-290 (NKAD), and 318-320 (SAL). 2 residues coordinate Mg(2+): Ser-173 and Thr-193.

Belongs to the TRAFAC class OBG-HflX-like GTPase superfamily. OBG GTPase family. Monomer. Requires Mg(2+) as cofactor.

Its subcellular location is the cytoplasm. An essential GTPase which binds GTP, GDP and possibly (p)ppGpp with moderate affinity, with high nucleotide exchange rates and a fairly low GTP hydrolysis rate. Plays a role in control of the cell cycle, stress response, ribosome biogenesis and in those bacteria that undergo differentiation, in morphogenesis control. The sequence is that of GTPase Obg from Stenotrophomonas maltophilia (strain K279a).